A 795-amino-acid polypeptide reads, in one-letter code: Phenylalanine--tRNA ligase beta subunit (795 aa).

The tRNA-binding domain occupies A39–R148. The B5 domain maps to P401 to D476. Mg(2+) is bound by residues D454, D460, E463, and E464. Residues S701–R794 form the FDX-ACB domain.

The protein belongs to the phenylalanyl-tRNA synthetase beta subunit family. Type 1 subfamily. As to quaternary structure, tetramer of two alpha and two beta subunits. Requires Mg(2+) as cofactor.

The protein localises to the cytoplasm. The catalysed reaction is tRNA(Phe) + L-phenylalanine + ATP = L-phenylalanyl-tRNA(Phe) + AMP + diphosphate + H(+). The polypeptide is Phenylalanine--tRNA ligase beta subunit (pheT) (Escherichia coli (strain K12)).